The chain runs to 503 residues: MEEFQGYLELYRSQQHDFLYPLIFREYIYALAHDRGLNRSVLLDNVGYDKKSSLLIIKRLISRMYQQNHFLISVNDSNQNKFFGYNKNLYSQIISEGFAVIVEIPFSLRLVSSLKETETVKSYNLRSIHSIFPFFEDKFPHLNYASDVLIPYPIHLEILVQTLRYCVKDPSSLHLLRLFLHEYYNWNTLITPKKSIFAKSNQRLFLLLYNSYVCEYESILLFLRNQSNHLRLTSSGILFERIRFYEKIKYPVEEVFANDFPATLWFFKDPFIQYVRYQGKSILASKDTPLLMNKWKYYLVHFWQCHFYVWSQPGRIHINQLSKHSFDFLGYLSSIRPNISVVRSQLLENSFLMDNAMKKLDTLFPIIPMIGSLAKVKFCNTSGHPISKSSWADSSDSDIIDRFVRIGGNLSHYYSGSSKKKSLYRIKYILRLSCVKTLARKHKSTVRTFLKRLGPKLLDEFFTEEEQIFSLLFPRTSSTLKRFYRGRIWYLDILCINDLVNHE.

This sequence belongs to the intron maturase 2 family. MatK subfamily.

It localises to the plastid. It is found in the chloroplast. Usually encoded in the trnK tRNA gene intron. Probably assists in splicing its own and other chloroplast group II introns. This chain is Maturase K, found in Rosa californica (California wild rose).